Reading from the N-terminus, the 234-residue chain is Segregation and condensation protein A (234 aa).

The protein belongs to the ScpA family. Component of a cohesin-like complex composed of ScpA, ScpB and the Smc homodimer, in which ScpA and ScpB bind to the head domain of Smc. The presence of the three proteins is required for the association of the complex with DNA.

The protein localises to the cytoplasm. In terms of biological role, participates in chromosomal partition during cell division. May act via the formation of a condensin-like complex containing Smc and ScpB that pull DNA away from mid-cell into both cell halves. The protein is Segregation and condensation protein A of Streptococcus pyogenes serotype M3 (strain ATCC BAA-595 / MGAS315).